A 317-amino-acid polypeptide reads, in one-letter code: CTP-dependent diacylglycerol kinase 1 (317 aa).

Residues 1 to 44 (MANEEELQTAESAFVTGARRYSNDYSESESSSKHSGCSTPVEGT) form a disordered region. Topologically, residues 1-130 (MANEEELQTA…DVDYRNVRLP (130 aa)) are lumenal. Residues 23–38 (NDYSESESSSKHSGCS) show a composition bias toward low complexity. The chain crosses the membrane as a helical span at residues 131-151 (LIVGFVHVLLLDVIRLHWPAF). Over 152–167 (NTLYCQVTGLLMRKKE) the chain is Cytoplasmic. The chain crosses the membrane as a helical span at residues 168-188 (VHTYNGVLWYLLGLIFAFSFF). Over 189-190 (SK) the chain is Lumenal. The chain crosses the membrane as a helical span at residues 191 to 211 (DVALVSLFLLSWCDTAASTVG). The Cytoplasmic segment spans residues 212 to 230 (RLYGHLTPRISRNKSLAGS). A helical membrane pass occupies residues 231-251 (LAAFVVGVISCAVFYGYFVPA). Over 252-271 (YSHVNHPGEIMWNPETSRLS) the chain is Lumenal. A helical membrane pass occupies residues 272-292 (LVQLSLLGGFVASLSEGIDLF). A topological domain (cytoplasmic) is located at residue Asn293. A helical transmembrane segment spans residues 294–314 (WDDNFTIPVLSAIFMHTIIAF). The Lumenal segment spans residues 315–317 (SQR).

It belongs to the DGK1 family. Ca(2+) is required as a cofactor. Mg(2+) serves as cofactor.

The protein resides in the endoplasmic reticulum membrane. Its subcellular location is the nucleus membrane. The enzyme catalyses a 1,2-diacyl-sn-glycerol + CTP = a 1,2-diacyl-sn-glycero-3-phosphate + CDP + H(+). In terms of biological role, CTP-dependent diacylglycerol kinase that catalyzes the phosphorylation of diacylglycerol (DAG) to phosphatidate (PA). Controls phosphatidate levels at the nuclear envelope. May be involved in vesicle trafficking between the endoplasmic reticulum and the Golgi apparatus. In Eremothecium gossypii (strain ATCC 10895 / CBS 109.51 / FGSC 9923 / NRRL Y-1056) (Yeast), this protein is CTP-dependent diacylglycerol kinase 1 (DGK1).